The sequence spans 449 residues: Cryptochrome DASH (449 aa).

The 133-residue stretch at 15-147 (RLGLFVFRND…PFHETPNNTL (133 aa)) folds into the Photolyase/cryptochrome alpha/beta domain.

It belongs to the DNA photolyase class-1 family. Requires FAD as cofactor. The cofactor is (6R)-5,10-methylene-5,6,7,8-tetrahydrofolate.

May have a photoreceptor function. Binds DNA; probably functions as a transcriptional repressor. In Idiomarina loihiensis (strain ATCC BAA-735 / DSM 15497 / L2-TR), this protein is Cryptochrome DASH (cry).